The chain runs to 544 residues: Aspartokinase 2, chloroplastic (544 aa).

Residues 1-84 constitute a chloroplast transit peptide; that stretch reads MASLQLYGVK…SSGTGKELTC (84 aa). ATP-binding residues include Lys87, Gly90, and Ser119. Glu203 contacts substrate. 2 consecutive ACT domains span residues 401-479 and 481-544; these read IAST…RRSI and SLIG…ETDP.

It belongs to the aspartokinase family. As to expression, expressed in stems, leaves, floral organs and young seedlings.

It localises to the plastid. It is found in the chloroplast. It catalyses the reaction L-aspartate + ATP = 4-phospho-L-aspartate + ADP. It participates in amino-acid biosynthesis; L-lysine biosynthesis via DAP pathway; (S)-tetrahydrodipicolinate from L-aspartate: step 1/4. It functions in the pathway amino-acid biosynthesis; L-methionine biosynthesis via de novo pathway; L-homoserine from L-aspartate: step 1/3. Its pathway is amino-acid biosynthesis; L-threonine biosynthesis; L-threonine from L-aspartate: step 1/5. Its activity is regulated as follows. Allosterically inhibited by lysine, but not by S-adenosyl-L-methionine (SAM). K(0.5) for lysine in the presence of physiological concentrations of substrates is 12.5 uM. No inhibition by threonine or leucine and no activation or inhibition by alanine, cysteine, isoleucine, serine, valine, methionine, glutamine, asparagine, glutamic acid or arginine. Its function is as follows. Involved in the first step of essential amino acids lysine, threonine, methionine and isoleucine synthesis via the aspartate-family pathway. The sequence is that of Aspartokinase 2, chloroplastic (AK2) from Arabidopsis thaliana (Mouse-ear cress).